Consider the following 68-residue polypeptide: Antimicrobial peptide UyCT5 (68 aa).

Positions 1–23 are cleaved as a signal peptide; it reads MKNQFAILLLAVVFLQLISQSDA. Position 36 is a leucine amide (Leu-36). The propeptide occupies 40 to 68; that stretch reads GLKNADRLDELFDGDISDADLDFLRELMR.

It belongs to the non-disulfide-bridged peptide (NDBP) superfamily. Short antimicrobial peptide (group 4) family. In terms of tissue distribution, expressed by the venom gland.

It is found in the secreted. It localises to the target cell membrane. Its function is as follows. Antimicrobial peptide that inhibits the growth of Gram-positive (S.aureus, MIC=1 uM) and Gram-negative bacteria (E.coli, MIC=15 uM and P.aeruginosa, MIC=2 uM). It also shows 37% of hemolysis when 15 uM are tested (93% at 50 uM). The sequence is that of Antimicrobial peptide UyCT5 from Urodacus yaschenkoi (Inland robust scorpion).